The chain runs to 620 residues: Glutathione-regulated potassium-efflux system protein KefC (620 aa).

12 helical membrane passes run 4–24, 26–46, 54–74, 90–110, 114–134, 149–169, 178–198, 218–238, 270–290, 294–314, 327–347, and 359–379; these read HTLI…PIAV, LGLG…PWGL, SILH…GLEL, GALQ…LLGL, VAEL…MQAM, FAVL…IPLL, MGAF…VVLL, VFSA…EEVG, GLLL…GTLI, LRIV…LWLI, WFAV…GAAQ, and SLTL…VILN. An RCK N-terminal domain is found at 399-518; it reads QPRVIIAGFG…AGVEKPERET (120 aa). A disordered region spans residues 597–620; sequence GWQGTEEGKHTGNMADEPETKPSS.

Belongs to the monovalent cation:proton antiporter 2 (CPA2) transporter (TC 2.A.37) family. KefC subfamily. Homodimer. Interacts with the regulatory subunit KefF.

It is found in the cell inner membrane. Pore-forming subunit of a potassium efflux system that confers protection against electrophiles. Catalyzes K(+)/H(+) antiport. This chain is Glutathione-regulated potassium-efflux system protein KefC, found in Escherichia coli (strain SMS-3-5 / SECEC).